The sequence spans 220 residues: Cytidylate kinase (220 aa).

10-18 (GPASSGKST) lines the ATP pocket.

This sequence belongs to the cytidylate kinase family. Type 1 subfamily.

It localises to the cytoplasm. It catalyses the reaction CMP + ATP = CDP + ADP. The enzyme catalyses dCMP + ATP = dCDP + ADP. The polypeptide is Cytidylate kinase (Lactococcus lactis subsp. cremoris (strain MG1363)).